Reading from the N-terminus, the 98-residue chain is ESAT-6-like protein EsxM (98 aa).

The protein belongs to the WXG100 family. CFP-10 subfamily.

Its subcellular location is the secreted. Alters the host macrophage cytoskeleton and enhances macrophage motility. Promotes granuloma efflux, extrapulmonary dissemination of infection and bone disease. The chain is ESAT-6-like protein EsxM from Mycobacterium marinum (strain ATCC BAA-535 / M).